We begin with the raw amino-acid sequence, 217 residues long: tRNA (guanine-N(7)-)-methyltransferase (217 aa).

Residues E44, E69, D96, and D118 each contribute to the S-adenosyl-L-methionine site. Residue D118 is part of the active site. Residues K122, D154, and 191-194 (TEYE) contribute to the substrate site.

This sequence belongs to the class I-like SAM-binding methyltransferase superfamily. TrmB family.

The enzyme catalyses guanosine(46) in tRNA + S-adenosyl-L-methionine = N(7)-methylguanosine(46) in tRNA + S-adenosyl-L-homocysteine. Its pathway is tRNA modification; N(7)-methylguanine-tRNA biosynthesis. In terms of biological role, catalyzes the formation of N(7)-methylguanine at position 46 (m7G46) in tRNA. The polypeptide is tRNA (guanine-N(7)-)-methyltransferase (Bacillus cereus (strain G9842)).